We begin with the raw amino-acid sequence, 205 residues long: Peptidyl-tRNA hydrolase (205 aa).

Position 14 (Tyr14) interacts with tRNA. The active-site Proton acceptor is His19. Residues Tyr64, Asn66, and Asn112 each coordinate tRNA.

Belongs to the PTH family. In terms of assembly, monomer.

It localises to the cytoplasm. The catalysed reaction is an N-acyl-L-alpha-aminoacyl-tRNA + H2O = an N-acyl-L-amino acid + a tRNA + H(+). In terms of biological role, hydrolyzes ribosome-free peptidyl-tRNAs (with 1 or more amino acids incorporated), which drop off the ribosome during protein synthesis, or as a result of ribosome stalling. Its function is as follows. Catalyzes the release of premature peptidyl moieties from peptidyl-tRNA molecules trapped in stalled 50S ribosomal subunits, and thus maintains levels of free tRNAs and 50S ribosomes. This chain is Peptidyl-tRNA hydrolase, found in Parvibaculum lavamentivorans (strain DS-1 / DSM 13023 / NCIMB 13966).